A 257-amino-acid chain; its full sequence is Acetylglutamate kinase (257 aa).

Residues 40–41, arginine 62, and asparagine 155 contribute to the substrate site; that span reads GG.

This sequence belongs to the acetylglutamate kinase family. ArgB subfamily.

Its subcellular location is the cytoplasm. The catalysed reaction is N-acetyl-L-glutamate + ATP = N-acetyl-L-glutamyl 5-phosphate + ADP. Its pathway is amino-acid biosynthesis; L-arginine biosynthesis; N(2)-acetyl-L-ornithine from L-glutamate: step 2/4. Its function is as follows. Catalyzes the ATP-dependent phosphorylation of N-acetyl-L-glutamate. The sequence is that of Acetylglutamate kinase from Shouchella clausii (strain KSM-K16) (Alkalihalobacillus clausii).